The following is a 204-amino-acid chain: Guanylate kinase (204 aa).

The 179-residue stretch at 18–196 (PKLFTISAPA…SYEVLKSIFI (179 aa)) folds into the Guanylate kinase-like domain. 25–32 (APAGAGKT) contacts ATP.

It belongs to the guanylate kinase family.

The protein localises to the cytoplasm. The catalysed reaction is GMP + ATP = GDP + ADP. Functionally, essential for recycling GMP and indirectly, cGMP. This chain is Guanylate kinase, found in Chlamydia abortus (strain DSM 27085 / S26/3) (Chlamydophila abortus).